We begin with the raw amino-acid sequence, 292 residues long: Bifunctional protein FolD 1 (292 aa).

Gly165–Ser167 lines the NADP(+) pocket.

It belongs to the tetrahydrofolate dehydrogenase/cyclohydrolase family. In terms of assembly, homodimer.

The catalysed reaction is (6R)-5,10-methylene-5,6,7,8-tetrahydrofolate + NADP(+) = (6R)-5,10-methenyltetrahydrofolate + NADPH. It carries out the reaction (6R)-5,10-methenyltetrahydrofolate + H2O = (6R)-10-formyltetrahydrofolate + H(+). Its pathway is one-carbon metabolism; tetrahydrofolate interconversion. Catalyzes the oxidation of 5,10-methylenetetrahydrofolate to 5,10-methenyltetrahydrofolate and then the hydrolysis of 5,10-methenyltetrahydrofolate to 10-formyltetrahydrofolate. This is Bifunctional protein FolD 1 from Myxococcus xanthus (strain DK1622).